A 315-amino-acid polypeptide reads, in one-letter code: Homoserine kinase (315 aa).

97-107 lines the ATP pocket; the sequence is PPARGLGSSAT.

Belongs to the GHMP kinase family. Homoserine kinase subfamily.

The protein localises to the cytoplasm. The catalysed reaction is L-homoserine + ATP = O-phospho-L-homoserine + ADP + H(+). It participates in amino-acid biosynthesis; L-threonine biosynthesis; L-threonine from L-aspartate: step 4/5. In terms of biological role, catalyzes the ATP-dependent phosphorylation of L-homoserine to L-homoserine phosphate. This is Homoserine kinase from Prochlorococcus marinus (strain MIT 9312).